Consider the following 214-residue polypeptide: Ion-translocating oxidoreductase complex subunit G (214 aa).

A helical transmembrane segment spans residues 13–33 (ALLLGLFALVGVGLVALVQQF). Position 180 is an FMN phosphoryl threonine (T180).

The protein belongs to the RnfG family. The complex is composed of six subunits: RnfA, RnfB, RnfC, RnfD, RnfE and RnfG. The cofactor is FMN.

It localises to the cell inner membrane. Functionally, part of a membrane-bound complex that couples electron transfer with translocation of ions across the membrane. This is Ion-translocating oxidoreductase complex subunit G from Pseudomonas aeruginosa (strain UCBPP-PA14).